Reading from the N-terminus, the 41-residue chain is uncharacterized protein (41 aa).

This is an uncharacterized protein from Archaeoglobus fulgidus (strain ATCC 49558 / DSM 4304 / JCM 9628 / NBRC 100126 / VC-16).